Here is a 378-residue protein sequence, read N- to C-terminus: Erythronate-4-phosphate dehydrogenase (378 aa).

Substrate contacts are provided by Ser-45 and Thr-66. Residues Asp-146 and Thr-175 each coordinate NAD(+). Residue Arg-208 is part of the active site. Asp-232 serves as a coordination point for NAD(+). The active site involves Glu-237. His-254 serves as the catalytic Proton donor. Gly-257 lines the NAD(+) pocket. Position 258 (Tyr-258) interacts with substrate.

This sequence belongs to the D-isomer specific 2-hydroxyacid dehydrogenase family. PdxB subfamily. As to quaternary structure, homodimer.

Its subcellular location is the cytoplasm. The catalysed reaction is 4-phospho-D-erythronate + NAD(+) = (R)-3-hydroxy-2-oxo-4-phosphooxybutanoate + NADH + H(+). Its pathway is cofactor biosynthesis; pyridoxine 5'-phosphate biosynthesis; pyridoxine 5'-phosphate from D-erythrose 4-phosphate: step 2/5. Functionally, catalyzes the oxidation of erythronate-4-phosphate to 3-hydroxy-2-oxo-4-phosphonooxybutanoate. The chain is Erythronate-4-phosphate dehydrogenase from Escherichia coli (strain 55989 / EAEC).